The following is a 238-amino-acid chain: CFA/I fimbrial subunit A (238 aa).

Positions 1-19 (MHKLFYLLSLLMAPFVANA) are cleaved as a signal peptide.

It is found in the fimbrium. Functionally, might function as a shuttle protein in the transport of fimbria through the periplasmic space or might function as an adhesin. In Escherichia coli, this protein is CFA/I fimbrial subunit A (cfaA).